The sequence spans 379 residues: Mannitol-1-phosphate 5-dehydrogenase (379 aa).

3 to 14 provides a ligand contact to NAD(+); sequence ALHFGAGNIGRG.

It belongs to the mannitol dehydrogenase family.

It catalyses the reaction D-mannitol 1-phosphate + NAD(+) = beta-D-fructose 6-phosphate + NADH + H(+). This Actinobacillus pleuropneumoniae serotype 3 (strain JL03) protein is Mannitol-1-phosphate 5-dehydrogenase.